A 400-amino-acid chain; its full sequence is MAKQKFDRSKPHCNVGTIGHVDHGKTTLTAAITRTLSTKGWADFRAYDQIDNAPEEKARGLTIAISHIEYQTETRHYAHIDCPGHADYIKNMITGAAQMDGAILVVSAPDGPMPQTREHVLLIHQVEVPAVVVALNKCDMMDDEELLELVELEVRELLTKNSFPGDEIPIVRVSAIKALECGCGKRECEWCGRIWKLMDAVDSYIPIPPRPVDKPFLMKVEDVFSIKGRGTVATGRVERGIIKGGDEVDLVGLHHEPRKIVVTSLEMFHKILDSAEPGDAVGLLLRGVEREDIERGMVLAKPGSIKPHINAEAEVYVLSKDEGGRHTPFFNGYKPQFFFGTTDVTGEIHLPEGVEMVVPGDHVKMKISTIYPVAMEKGMRFAIREGGKTVGAGAISQVLS.

Residues Lys-10–Arg-210 enclose the tr-type G domain. The segment at Gly-19–Thr-26 is G1. A GTP-binding site is contributed by Gly-19–Thr-26. Mg(2+) is bound at residue Thr-26. The interval Gly-60 to Ala-64 is G2. Positions Asp-81–Gly-84 are G3. GTP-binding positions include Asp-81 to His-85 and Asn-136 to Asp-139. Residues Asn-136–Asp-139 form a G4 region. The G5 stretch occupies residues Ser-174 to Ile-176.

The protein belongs to the TRAFAC class translation factor GTPase superfamily. Classic translation factor GTPase family. EF-Tu/EF-1A subfamily. Monomer.

The protein resides in the cytoplasm. It carries out the reaction GTP + H2O = GDP + phosphate + H(+). GTP hydrolase that promotes the GTP-dependent binding of aminoacyl-tRNA to the A-site of ribosomes during protein biosynthesis. The sequence is that of Elongation factor Tu from Dehalococcoides mccartyi (strain ATCC BAA-2266 / KCTC 15142 / 195) (Dehalococcoides ethenogenes (strain 195)).